We begin with the raw amino-acid sequence, 614 residues long: Leucine-rich repeat and immunoglobulin-like domain-containing nogo receptor-interacting protein 1 (614 aa).

The first 35 residues, 1–35 (MLAGGVRSMPSPLLACWQPILLLVLGSVLSGSATG), serve as a signal peptide directing secretion. Intrachain disulfides connect C36–C42 and C40–C51. One can recognise an LRRNT domain in the interval 36–65 (CPPRCECSAQDRAVLCHRKRFVAVPEGIPT). Topologically, residues 36-555 (CPPRCECSAQ…FDIKTLIIAT (520 aa)) are extracellular. LRR repeat units lie at residues 66 to 87 (ETRL…EFAS), 90 to 111 (HLEE…AFNN), 114 to 135 (NLRT…VFTG), 138 to 159 (NLTK…MFQD), 162 to 183 (NLKS…AFSG), 186 to 207 (SLEQ…ALSH), 210 to 231 (GLIV…SFKR), 258 to 279 (NLTS…AVRH), 282 to 303 (YLRF…MLHE), 306 to 327 (RLQE…AFRG), and 330 to 351 (YLRV…VFHS). N-linked (GlcNAc...) asparagine glycosylation is present at N138. An N-linked (GlcNAc...) asparagine glycan is attached at N196. Residues N258, N268, and N287 are each glycosylated (N-linked (GlcNAc...) asparagine). An N-linked (GlcNAc...) asparagine glycan is attached at N335. The region spanning 363–417 (NPLACDCRLLWVFRRRWRLNFNRQQPTCATPEFVQGKEFKDFPDVLLPNYFTCRR) is the LRRCT domain. Disulfide bonds link C367–C390, C369–C415, and C440–C491. The Ig-like C2-type domain maps to 405–507 (PDVLLPNYFT…GNDSMPAHLH (103 aa)). 2 N-linked (GlcNAc...) asparagine glycosylation sites follow: N486 and N536. The helical transmembrane segment at 556 to 576 (TMGFISFLGVVLFCLVLLFLW) threads the bilayer. Residues 577–614 (SRGKGNTKHNIEIEYVPRKSDAGISSADAPRKFNMKMI) lie on the Cytoplasmic side of the membrane. The residue at position 596 (S596) is a Phosphoserine.

In terms of assembly, homotetramer. Forms a ternary complex with RTN4R/NGFR and RTN4R/TNFRSF19. Interacts with NGRF, RTN4R and MYT1L. Post-translationally, N-glycosylated. Contains predominantly high-mannose glycans.

The protein localises to the cell membrane. Its function is as follows. Functional component of the Nogo receptor signaling complex (RTN4R/NGFR) in RhoA activation responsible for some inhibition of axonal regeneration by myelin-associated factors. Is also an important negative regulator of oligodentrocyte differentiation and axonal myelination. Acts in conjunction with RTN4 and RTN4R in regulating neuronal precursor cell motility during cortical development. This chain is Leucine-rich repeat and immunoglobulin-like domain-containing nogo receptor-interacting protein 1 (LINGO1), found in Macaca fascicularis (Crab-eating macaque).